The sequence spans 161 residues: Allophycocyanin beta chain (161 aa).

Asn-71 carries the N4-methylasparagine modification. Cys-81 contacts (2R,3E)-phycocyanobilin.

The protein belongs to the phycobiliprotein family. Heterodimer of an alpha and a beta chain. Contains one covalently linked phycocyanobilin chromophore.

Its subcellular location is the plastid. The protein resides in the chloroplast thylakoid membrane. In terms of biological role, light-harvesting photosynthetic bile pigment-protein from the phycobiliprotein complex. Allophycocyanin has a maximum absorption at approximately 650 nanometers. The protein is Allophycocyanin beta chain (apcB) of Cyanidium caldarium (Red alga).